The primary structure comprises 179 residues: Large ribosomal subunit protein uL5 (179 aa).

The protein belongs to the universal ribosomal protein uL5 family. In terms of assembly, part of the 50S ribosomal subunit; part of the 5S rRNA/L5/L18/L25 subcomplex. Contacts the 5S rRNA and the P site tRNA. Forms a bridge to the 30S subunit in the 70S ribosome.

Functionally, this is one of the proteins that bind and probably mediate the attachment of the 5S RNA into the large ribosomal subunit, where it forms part of the central protuberance. In the 70S ribosome it contacts protein S13 of the 30S subunit (bridge B1b), connecting the 2 subunits; this bridge is implicated in subunit movement. Contacts the P site tRNA; the 5S rRNA and some of its associated proteins might help stabilize positioning of ribosome-bound tRNAs. The sequence is that of Large ribosomal subunit protein uL5 from Aliivibrio salmonicida (strain LFI1238) (Vibrio salmonicida (strain LFI1238)).